Consider the following 639-residue polypeptide: PTS-dependent dihydroxyacetone kinase operon regulatory protein (639 aa).

The interval 1–318 (MSGAFNNDGR…MRQLMTSQLG (318 aa)) is sensor domain. The GAF domain occupies 52–189 (AMLTLGQAAL…AIAREVGNLL (138 aa)). The 63-residue stretch at 203–265 (NQLNALLESM…AVLQQAIKQA (63 aa)) folds into the PAS domain. The Sigma-54 factor interaction domain maps to 327-552 (MPQDDPQTRR…LYSVIENLAL (226 aa)). ATP is bound by residues 355-362 (GEEGVGKA) and 415-424 (AHGGTLFLEK).

In terms of assembly, homodimer. DhaR forms complexes with DhaK and DhaL-ADP.

Positively regulates the dhaKLM operon from a sigma-70 promoter. Represses its own expression. The polypeptide is PTS-dependent dihydroxyacetone kinase operon regulatory protein (Escherichia coli (strain K12)).